A 191-amino-acid polypeptide reads, in one-letter code: General negative regulator of transcription subunit 2 (191 aa).

The protein belongs to the CNOT2/3/5 family. Forms a NOT protein complex that comprises NOT1, NOT2, NOT3, NOT4 and NOT5. Subunit of the 1.0 MDa CCR4-NOT core complex that contains CCR4, CAF1, NOT1, NOT2, NOT3, NOT4, NOT5, CAF40 and CAF130. In the complex interacts with NOT1 and NOT5. The core complex probably is part of a less characterized 1.9 MDa CCR4-NOT complex.

It localises to the cytoplasm. It is found in the nucleus. Acts as a component of the CCR4-NOT core complex, which in the nucleus seems to be a general transcription factor, and in the cytoplasm the major mRNA deadenylase involved in mRNA turnover. NOT2 is required for the integrity of the complex. The NOT protein subcomplex negatively regulates the basal and activated transcription of many genes. Preferentially affects TC-type TATA element-dependent transcription. Could directly or indirectly inhibit component(s) of the general transcription machinery. This Saccharomyces cerevisiae (strain ATCC 204508 / S288c) (Baker's yeast) protein is General negative regulator of transcription subunit 2 (CDC36).